A 283-amino-acid polypeptide reads, in one-letter code: (+)-O-methylkolavelool synthase (283 aa).

S-adenosyl-L-methionine is bound by residues Q106, N129–A130, and H151.

It belongs to the methyltransferase superfamily.

The enzyme catalyses (+)-kolavelool + S-adenosyl-L-methionine = (+)-O-methylkolavelool + S-adenosyl-L-homocysteine + H(+). In terms of biological role, involved in the biosynthesis of the diterpene (+)-O-methylkolavelool. Catalyzes the transfer of a methyl group from S-adenosyl-L-methionine to the hydroxy group of (+)-kolavelool, forming (+)-O-methylkolavelool. The sequence is that of (+)-O-methylkolavelool synthase from Herpetosiphon aurantiacus (strain ATCC 23779 / DSM 785 / 114-95).